Consider the following 197-residue polypeptide: Ion-translocating oxidoreductase complex subunit B (197 aa).

Residues 1–26 form a hydrophobic region; the sequence is MSIVIIAVLALSALALTFGAVLGFAS. The 4Fe-4S domain maps to 32–90; sequence EGNPIVDQIDGLLPQTQCGQCGYPGCRPYAEAIANGDAINKCPPGGEATITALADLLDV. Residues cysteine 49, cysteine 52, cysteine 57, cysteine 73, cysteine 115, cysteine 118, cysteine 121, cysteine 125, cysteine 145, cysteine 148, cysteine 151, and cysteine 155 each contribute to the [4Fe-4S] cluster site. 4Fe-4S ferredoxin-type domains lie at 106–135 and 136–165; these read QVAYIREDECIGCTKCIQACPVDAILGAAK and QMHTVIVSECTGCDLCVEPCPVDCIDMIPA.

The protein belongs to the 4Fe4S bacterial-type ferredoxin family. RnfB subfamily. The complex is composed of six subunits: RnfA, RnfB, RnfC, RnfD, RnfE and RnfG. Requires [4Fe-4S] cluster as cofactor.

Its subcellular location is the cell inner membrane. Its function is as follows. Part of a membrane-bound complex that couples electron transfer with translocation of ions across the membrane. This Hahella chejuensis (strain KCTC 2396) protein is Ion-translocating oxidoreductase complex subunit B.